A 366-amino-acid chain; its full sequence is ATP-dependent 6-phosphofructokinase (366 aa).

ATP contacts are provided by residues G16, 78–79, and 118–121; these read RE and GNGT. Residues 74–94 are disordered; sequence LGTSREKPFKPDPGEKDSEAG. The segment covering 77 to 94 has biased composition (basic and acidic residues); that stretch reads SREKPFKPDPGEKDSEAG. N119 provides a ligand contact to Mg(2+). Residues 141–143, R178, 185–187, E238, R282, and 288–291 each bind substrate; these read TID, MGH, and YLQR. Catalysis depends on D143, which acts as the Proton acceptor.

It belongs to the phosphofructokinase type A (PFKA) family. Mixed-substrate PFK group III subfamily. Homodimer or homotetramer. Mg(2+) is required as a cofactor.

Its subcellular location is the cytoplasm. It carries out the reaction beta-D-fructose 6-phosphate + ATP = beta-D-fructose 1,6-bisphosphate + ADP + H(+). It functions in the pathway carbohydrate degradation; glycolysis; D-glyceraldehyde 3-phosphate and glycerone phosphate from D-glucose: step 3/4. Its function is as follows. Catalyzes the phosphorylation of D-fructose 6-phosphate to fructose 1,6-bisphosphate by ATP, the first committing step of glycolysis. The polypeptide is ATP-dependent 6-phosphofructokinase (Spirochaeta thermophila (strain ATCC 49972 / DSM 6192 / RI 19.B1)).